The chain runs to 119 residues: Immunoglobulin heavy variable 3-15 (119 aa).

Residues 1–19 (MEFGLSWIFLAAILKGVQC) form the signal peptide. The tract at residues 20–44 (EVQLVESGGGLVKPGGSLRLSCAAS) is framework-1. The 100-residue stretch at 20 to 119 (EVQLVESGGG…EDTAVYYCTT (100 aa)) folds into the Ig-like domain. Cys41 and Cys117 form a disulfide bridge. Residues 45-52 (GFTFSNAW) form a complementarity-determining-1 region. The framework-2 stretch occupies residues 53-69 (MSWVRQAPGKGLEWVGR). The tract at residues 70 to 79 (IKSKTDGGTT) is complementarity-determining-2. Residues 80 to 117 (DYAAPVKGRFTISRDDSKNTLYLQMNSLKTEDTAVYYC) are framework-3. The complementarity-determining-3 stretch occupies residues 118–119 (TT).

Immunoglobulins are composed of two identical heavy chains and two identical light chains; disulfide-linked.

It localises to the secreted. The protein resides in the cell membrane. V region of the variable domain of immunoglobulin heavy chains that participates in the antigen recognition. Immunoglobulins, also known as antibodies, are membrane-bound or secreted glycoproteins produced by B lymphocytes. In the recognition phase of humoral immunity, the membrane-bound immunoglobulins serve as receptors which, upon binding of a specific antigen, trigger the clonal expansion and differentiation of B lymphocytes into immunoglobulins-secreting plasma cells. Secreted immunoglobulins mediate the effector phase of humoral immunity, which results in the elimination of bound antigens. The antigen binding site is formed by the variable domain of one heavy chain, together with that of its associated light chain. Thus, each immunoglobulin has two antigen binding sites with remarkable affinity for a particular antigen. The variable domains are assembled by a process called V-(D)-J rearrangement and can then be subjected to somatic hypermutations which, after exposure to antigen and selection, allow affinity maturation for a particular antigen. The sequence is that of Immunoglobulin heavy variable 3-15 from Homo sapiens (Human).